Here is a 76-residue protein sequence, read N- to C-terminus: DNA-directed RNA polymerase subunit epsilon (76 aa).

This sequence belongs to the RNA polymerase subunit epsilon family. In terms of assembly, RNAP is composed of a core of 2 alpha, a beta and a beta' subunit. The core is associated with a delta subunit, and at least one of epsilon or omega. When a sigma factor is associated with the core the holoenzyme is formed, which can initiate transcription.

The enzyme catalyses RNA(n) + a ribonucleoside 5'-triphosphate = RNA(n+1) + diphosphate. Its function is as follows. A non-essential component of RNA polymerase (RNAP). In Lactococcus lactis subsp. lactis (strain IL1403) (Streptococcus lactis), this protein is DNA-directed RNA polymerase subunit epsilon.